The primary structure comprises 506 residues: ATP synthase subunit alpha, chloroplastic (506 aa).

170 to 177 is an ATP binding site; it reads GDRQTGKT.

It belongs to the ATPase alpha/beta chains family. As to quaternary structure, F-type ATPases have 2 components, CF(1) - the catalytic core - and CF(0) - the membrane proton channel. CF(1) has five subunits: alpha(3), beta(3), gamma(1), delta(1), epsilon(1). CF(0) has four main subunits: a, b, b' and c.

The protein resides in the plastid. The protein localises to the chloroplast thylakoid membrane. It carries out the reaction ATP + H2O + 4 H(+)(in) = ADP + phosphate + 5 H(+)(out). Functionally, produces ATP from ADP in the presence of a proton gradient across the membrane. The alpha chain is a regulatory subunit. This chain is ATP synthase subunit alpha, chloroplastic, found in Chlorella vulgaris (Green alga).